The following is a 211-amino-acid chain: Thymidylate kinase (211 aa).

10–17 (GGDGVGKS) contributes to the ATP binding site.

This sequence belongs to the thymidylate kinase family.

It catalyses the reaction dTMP + ATP = dTDP + ADP. In terms of biological role, phosphorylation of dTMP to form dTDP in both de novo and salvage pathways of dTTP synthesis. The sequence is that of Thymidylate kinase from Clavibacter michiganensis subsp. michiganensis (strain NCPPB 382).